A 166-amino-acid polypeptide reads, in one-letter code: Ribonuclease H (166 aa).

In terms of domain architecture, RNase H type-1 spans proline 5–glutamine 147. Residues aspartate 14, glutamate 52, aspartate 74, and aspartate 139 each contribute to the Mg(2+) site. The disordered stretch occupies residues glycine 128–alanine 166. Basic and acidic residues predominate over residues glycine 131–arginine 144.

This sequence belongs to the RNase H family. As to quaternary structure, monomer. Mg(2+) serves as cofactor.

The enzyme catalyses Endonucleolytic cleavage to 5'-phosphomonoester.. Endonuclease that specifically degrades the RNA of RNA-DNA hybrids. The sequence is that of Ribonuclease H (rnhA) from Thermus thermophilus (strain ATCC 27634 / DSM 579 / HB8).